Here is a 248-residue protein sequence, read N- to C-terminus: MKFLVDIHAHTIASTHAYSTFHDYLGVAKAKGIKLFAITDHGPDMADAPHFWHFVNMRVLPRIVDGVGVLRGIEANIKNEHGEIDFFGDYLKELDIVLAGFHEPVFPPSTKEAHTTALINSIESGNVDIITHPGNPAYPIDVKRVASAAAKHNVALEINNSSFLTSRKGSTCNCIEIANAVKAAGGLLVMGSDSHVAFSLGEFEKAIEVIETVGFPIERLLNRSPEALLSFLTARGHKSLDEYSALID.

Residues His-8, His-10, His-16, His-41, Glu-74, His-102, His-132, Asp-193, and His-195 each coordinate Zn(2+).

It belongs to the PHP family. It depends on Zn(2+) as a cofactor.

This is Probable phosphatase Sfri_3709 from Shewanella frigidimarina (strain NCIMB 400).